Here is a 413-residue protein sequence, read N- to C-terminus: Protein esc1 (413 aa).

Polar residues predominate over residues Met1–Met22. Disordered stretches follow at residues Met1–Ser202 and Met230–Gly265. A compositionally biased stretch (low complexity) spans Ser23–Gln42. A compositionally biased stretch (polar residues) spans Gln43–Gln63. Low complexity-rich tracts occupy residues Ser86 to Ala103 and Ser116 to Pro126. The span at Thr127 to Ala136 shows a compositional bias: polar residues. Over residues Ser150–Leu197 the composition is skewed to low complexity. One can recognise a bHLH domain in the interval Glu334–Leu385.

As to quaternary structure, efficient DNA binding requires dimerization with another bHLH protein.

It localises to the nucleus. Involved in the sexual differentiation process. Modulate the ability of the cell to differentiate in response to the nitrogen starvation signal; in particular in response to decreases in the level of cellular cAMP. In Schizosaccharomyces pombe (strain 972 / ATCC 24843) (Fission yeast), this protein is Protein esc1 (esc1).